A 395-amino-acid polypeptide reads, in one-letter code: Immediate-early protein ICP-46 (395 aa).

The protein belongs to the IIV-6 393L family.

This Dryophytes versicolor (chameleon treefrog) protein is Immediate-early protein ICP-46 (ICR489).